A 502-amino-acid chain; its full sequence is Putative F-box/FBD/LRR-repeat protein At5g22610 (502 aa).

The F-box domain maps to 17–63; the sequence is EDLISKLPEVLLSQILSYLPTKDIVRTSVLSKRWKSVWLLIPGLDLD. LRR repeat units lie at residues 70 to 98, 99 to 127, 147 to 180, 181 to 206, 208 to 228, 238 to 263, and 344 to 373; these read YDTF…KLSI, QKNE…DVEF, CKTL…CLEE, NVYS…TIVK, DDNV…SVGY, YYYD…TFNN, and SVWL…VLET. In terms of domain architecture, FBD spans 384 to 435; the sequence is VERRVSSVPECLLSSLEFVEIKNRISVDDGALEVARYFVENSVNLQKVVLRL.

This is Putative F-box/FBD/LRR-repeat protein At5g22610 from Arabidopsis thaliana (Mouse-ear cress).